We begin with the raw amino-acid sequence, 289 residues long: ATP synthase mitochondrial F1 complex assembly factor 2 (289 aa).

Residues 1–40 (MWRSCLRLRDGGRRLLNRPAGGPSASMSPGPTIPSPARAY) constitute a mitochondrion transit peptide. The interval 13 to 40 (RRLLNRPAGGPSASMSPGPTIPSPARAY) is disordered. K133 carries the post-translational modification N6-succinyllysine.

Belongs to the ATP12 family. In terms of assembly, interacts with ATP5F1B; involved in the assembly of the F1 component of the mitochondrial ATP synthase (ATPase). Interacts with FMC1. As to expression, widely expressed.

It is found in the mitochondrion inner membrane. Plays a role in the assembly of the F1 component of the mitochondrial ATP synthase (ATPase). This chain is ATP synthase mitochondrial F1 complex assembly factor 2, found in Homo sapiens (Human).